An 810-amino-acid chain; its full sequence is Plasminogen (810 aa).

Positions 1 to 19 (MEHKEVVLLLLLFLKSGQG) are cleaved as a signal peptide. Residues 20-98 (EPLDDYVNTQ…RDVVLFEKKV (79 aa)) enclose the PAN domain. 12 disulfides stabilise this stretch: cysteine 49–cysteine 73, cysteine 53–cysteine 61, cysteine 103–cysteine 181, cysteine 124–cysteine 164, cysteine 152–cysteine 176, cysteine 185–cysteine 262, cysteine 188–cysteine 316, cysteine 206–cysteine 245, cysteine 234–cysteine 257, cysteine 275–cysteine 352, cysteine 296–cysteine 335, and cysteine 324–cysteine 347. 3 Kringle domains span residues 103-181 (CKTG…IPEC), 184-262 (ACMH…IPRC), and 275-352 (CLKG…IPSC). The tract at residues 126–145 (KWSSTSPHRPRFSPATHPSE) is disordered. The L-lysine site is built by arginine 136, aspartate 158, and arginine 172. An O-linked (GalNAc...) threonine glycan is attached at threonine 365. 9 disulfides stabilise this stretch: cysteine 377/cysteine 454, cysteine 398/cysteine 437, cysteine 426/cysteine 449, cysteine 481/cysteine 560, cysteine 502/cysteine 543, cysteine 531/cysteine 555, cysteine 567/cysteine 685, cysteine 577/cysteine 585, and cysteine 607/cysteine 623. Kringle domains lie at 377-454 (CYHG…LKKC) and 481-560 (CMFG…VPQC). L-lysine is bound by residues aspartate 432 and arginine 445. The 228-residue stretch at 581–808 (VVGGCVANAH…FVTWIEGVMR (228 aa)) folds into the Peptidase S1 domain. Phosphoserine is present on serine 597. Active-site charge relay system residues include histidine 622 and aspartate 665. Serine 688 is modified (phosphoserine). Cystine bridges form between cysteine 699/cysteine 766, cysteine 729/cysteine 745, and cysteine 756/cysteine 784. Serine 760 functions as the Charge relay system in the catalytic mechanism.

Belongs to the peptidase S1 family. Plasminogen subfamily. Interacts with CSPG4 and AMOT. Interacts (via the Kringle domains) with HRG; the interaction tethers PLG to the cell surface and enhances its activation. Interacts (via Kringle 4 domain) with ADA; the interaction stimulates PLG activation when in complex with DPP4. Angiostatin: Interacts with ATP5F1A; the interaction inhibits most of the angiogenic effects of angiostatin. In terms of processing, in the presence of the inhibitor, the activation involves only cleavage after Arg-580, yielding two chains held together by two disulfide bonds. In the absence of the inhibitor, the activation involves additionally the removal of the activation peptide.

It localises to the secreted. It catalyses the reaction Preferential cleavage: Lys-|-Xaa &gt; Arg-|-Xaa, higher selectivity than trypsin. Converts fibrin into soluble products.. Its activity is regulated as follows. Converted into plasmin by plasminogen activators, both plasminogen and its activator being bound to fibrin. Activated with catalytic amounts of streptokinase. Functionally, plasmin dissolves the fibrin of blood clots and acts as a proteolytic factor in a variety of other processes including embryonic development, tissue remodeling, tumor invasion, and inflammation. In ovulation, weakens the walls of the Graafian follicle. It activates the urokinase-type plasminogen activator, collagenases and several complement zymogens, such as C1, C4 and C5. Cleavage of fibronectin and laminin leads to cell detachment and apoptosis. Also cleaves fibrin, thrombospondin and von Willebrand factor. Its role in tissue remodeling and tumor invasion may be modulated by CSPG4. Binds to cells. The protein is Plasminogen (PLG) of Pongo abelii (Sumatran orangutan).